A 534-amino-acid chain; its full sequence is Phosphoenolpyruvate carboxykinase (ATP) (534 aa).

Arg58, Tyr194, and Lys200 together coordinate substrate. ATP contacts are provided by residues Lys200, His219, and 235–243 (GLSGTGKTT). Positions 200 and 219 each coordinate Mn(2+). Residue Asp256 coordinates Mn(2+). Positions 284, 322, and 449 each coordinate ATP. Arg322 lines the substrate pocket.

The protein belongs to the phosphoenolpyruvate carboxykinase (ATP) family. It depends on Mn(2+) as a cofactor.

It localises to the cytoplasm. The catalysed reaction is oxaloacetate + ATP = phosphoenolpyruvate + ADP + CO2. It participates in carbohydrate biosynthesis; gluconeogenesis. Its function is as follows. Involved in the gluconeogenesis. Catalyzes the conversion of oxaloacetate (OAA) to phosphoenolpyruvate (PEP) through direct phosphoryl transfer between the nucleoside triphosphate and OAA. This is Phosphoenolpyruvate carboxykinase (ATP) from Novosphingobium aromaticivorans (strain ATCC 700278 / DSM 12444 / CCUG 56034 / CIP 105152 / NBRC 16084 / F199).